The chain runs to 930 residues: Translation initiation factor IF-2 (930 aa).

The disordered stretch occupies residues 51–325; it reads PGAGKSAAKP…TREIGGVKVP (275 aa). Composition is skewed to low complexity over residues 56 to 111 and 121 to 162; these read SAAK…KPGV and TPAA…GNNP. A compositionally biased stretch (gly residues) spans 263–295; that stretch reads RPGGGPGGGPGRPGGPGGRGGRGNAQGAFGRGG. Basic residues predominate over residues 296–307; it reads GPRKGRKSKRAK. A compositionally biased stretch (basic and acidic residues) spans 308-320; sequence RQEFEQQHTREIG. Residues 422–596 form the tr-type G domain; that stretch reads PRPAVVTVMG…LTADAALELT (175 aa). The tract at residues 431–438 is G1; sequence GHVDHGKT. 431–438 contacts GTP; it reads GHVDHGKT. The tract at residues 456–460 is G2; sequence GITQH. Residues 481–484 are G3; it reads DTPG. Residues 481–485 and 535–538 each bind GTP; these read DTPGH and NKID. Residues 535–538 are G4; the sequence is NKID. A G5 region spans residues 571 to 573; the sequence is SAR.

Belongs to the TRAFAC class translation factor GTPase superfamily. Classic translation factor GTPase family. IF-2 subfamily.

The protein localises to the cytoplasm. One of the essential components for the initiation of protein synthesis. Protects formylmethionyl-tRNA from spontaneous hydrolysis and promotes its binding to the 30S ribosomal subunits. Also involved in the hydrolysis of GTP during the formation of the 70S ribosomal complex. The chain is Translation initiation factor IF-2 from Micrococcus luteus (strain ATCC 4698 / DSM 20030 / JCM 1464 / CCM 169 / CCUG 5858 / IAM 1056 / NBRC 3333 / NCIMB 9278 / NCTC 2665 / VKM Ac-2230) (Micrococcus lysodeikticus).